The chain runs to 374 residues: MFPPTRVQASSRVVLKIFHFILVAFSLRSRRLSRLVLWLQFLGWLTWFISMWTQSVIYAQTIDCTLDCSLRHILTFFQTVSHAFIVVTSFLDGFRIKQDQLDEPIAFEDSDPWLAFTVLAMLVPTLGVEYLVCSNAPEYAFRIRIYHLKTLPSFLALQVQIISFILEVMKVNIRVRQTKLQLLILARELSCRWPQRKQKPQFSDQQAHRVKDLKRRYNDLHYLFVRINGYFGGSLLTIIIVHFAIFVSNSYWLFVDIRTRPWRIYAILLNLGFIFNVALQMAAACWHCQQSYNLGRQIGCLISKLVKPQGSKLYNDLVSEFSLQTLHQRFVVTAKDFFSLNLHLLSSMFAAVVTYLVILIQFMFAERSSTRGSG.

Topologically, residues 1 to 6 are cytoplasmic; sequence MFPPTR. Residues 7–27 form a helical membrane-spanning segment; sequence VQASSRVVLKIFHFILVAFSL. The Extracellular portion of the chain corresponds to 28–36; sequence RSRRLSRLV. A helical transmembrane segment spans residues 37-57; sequence LWLQFLGWLTWFISMWTQSVI. At 58-72 the chain is on the cytoplasmic side; it reads YAQTIDCTLDCSLRH. A helical transmembrane segment spans residues 73–93; the sequence is ILTFFQTVSHAFIVVTSFLDG. At 94–112 the chain is on the extracellular side; sequence FRIKQDQLDEPIAFEDSDP. The helical transmembrane segment at 113–133 threads the bilayer; the sequence is WLAFTVLAMLVPTLGVEYLVC. At 134-226 the chain is on the cytoplasmic side; sequence SNAPEYAFRI…YNDLHYLFVR (93 aa). A helical transmembrane segment spans residues 227 to 247; that stretch reads INGYFGGSLLTIIIVHFAIFV. The Extracellular portion of the chain corresponds to 248 to 263; that stretch reads SNSYWLFVDIRTRPWR. A helical transmembrane segment spans residues 264–284; that stretch reads IYAILLNLGFIFNVALQMAAA. Residues 285–343 are Cytoplasmic-facing; the sequence is CWHCQQSYNLGRQIGCLISKLVKPQGSKLYNDLVSEFSLQTLHQRFVVTAKDFFSLNLH. A helical transmembrane segment spans residues 344–364; sequence LLSSMFAAVVTYLVILIQFMF. At 365-374 the chain is on the extracellular side; that stretch reads AERSSTRGSG.

Belongs to the insect chemoreceptor superfamily. Gustatory receptor (GR) family. Gr2a subfamily. In terms of tissue distribution, expressed in the adult labellar chemosensory neurons and labral sense organ. Expressed in neurons of the dorsal pharyngeal sense organ of larvae.

The protein resides in the cell membrane. Its function is as follows. Probable gustatory receptor which mediates acceptance or avoidance behavior, depending on its substrates. This is Gustatory receptor 23a (Gr23a) from Drosophila melanogaster (Fruit fly).